A 442-amino-acid polypeptide reads, in one-letter code: MAAARYWKLVPRGRGLSQNAAAKASATAPEVRDLEVVATPVARYPPIVASMTADSKAARQRRVQRWQATVHAAPSVDEKIRILTKMQFKKYVVHPQISALNADRWYQSFTKTVFVSGLPPAPALSPPPPSLDLAALRAAVCDCILQEQVYVRRRRPRSLFDRRQALASSILDQVVRTLVNLLAPLNPVLSTAALDCKRSVDFYWLRGEERIPAGHRKGHIDALRYQINDKPHNQIRISKQLPEFVPLDYSIPTEIPVMKCKPDKLPLFRRQYENSIFTGSKTADPCCYGHTQFHLIPDRLKRERLIRQNQAEQVEAVFRANAIASLFAWTGAQAMYQGFWSEADVTRPFVSQAVITDGKYFSFFCYQLNTLALTVQADQNNPRKNLCWGSQSQPLYETVEDNDVKGFDDGTLLQIVHFLLNKPREDGAQLLASQEKELDLGP.

The protein belongs to the mitochondrion-specific ribosomal protein mL65 family. As to quaternary structure, component of the mitochondrial ribosome small subunit (28S) which comprises a 12S rRNA and about 30 distinct proteins.

It is found in the mitochondrion. The protein is Large ribosomal subunit protein mL65 (Mrps30) of Mus musculus (Mouse).